A 778-amino-acid chain; its full sequence is Endonuclease MutS2 (778 aa).

329 to 336 (GPNTGGKT) contributes to the ATP binding site. The Smr domain occupies 703 to 778 (LDLRGKRYEE…GSGCTIVTFK (76 aa)).

The protein belongs to the DNA mismatch repair MutS family. MutS2 subfamily. Homodimer. Binds to stalled ribosomes, contacting rRNA.

In terms of biological role, endonuclease that is involved in the suppression of homologous recombination and thus may have a key role in the control of bacterial genetic diversity. Its function is as follows. Acts as a ribosome collision sensor, splitting the ribosome into its 2 subunits. Detects stalled/collided 70S ribosomes which it binds and splits by an ATP-hydrolysis driven conformational change. Acts upstream of the ribosome quality control system (RQC), a ribosome-associated complex that mediates the extraction of incompletely synthesized nascent chains from stalled ribosomes and their subsequent degradation. Probably generates substrates for RQC. The sequence is that of Endonuclease MutS2 from Streptococcus suis (strain 98HAH33).